The primary structure comprises 100 residues: Putative PIN1-like protein (100 aa).

Over residues 1–15 (MADEEKLPPGWEKRM) the composition is skewed to basic and acidic residues. 2 disordered regions span residues 1 to 52 (MADE…QGEP) and 69 to 100 (LDLAAGNHPDQGGGPGADQRLHPEDQGRREGL). The WW domain occupies 5 to 38 (EKLPPGWEKRMSRPSGRGYYFNHITNPSQWERPS). Residues 27-44 (HITNPSQWERPSGNSSSG) show a composition bias toward polar residues. Residues 87-100 (QRLHPEDQGRREGL) show a composition bias toward basic and acidic residues.

This chain is Putative PIN1-like protein (PIN1P1), found in Homo sapiens (Human).